The primary structure comprises 466 residues: Asparagine--tRNA ligase (466 aa).

The protein belongs to the class-II aminoacyl-tRNA synthetase family. Homodimer.

Its subcellular location is the cytoplasm. The enzyme catalyses tRNA(Asn) + L-asparagine + ATP = L-asparaginyl-tRNA(Asn) + AMP + diphosphate + H(+). The protein is Asparagine--tRNA ligase of Vibrio parahaemolyticus serotype O3:K6 (strain RIMD 2210633).